The following is a 322-amino-acid chain: Malate dehydrogenase (322 aa).

NAD(+) contacts are provided by residues 10 to 15 and aspartate 34; that span reads GSGQIG. Substrate is bound by residues arginine 83 and arginine 89. NAD(+) is bound by residues asparagine 96 and 119-121; that span reads ITN. Substrate-binding residues include asparagine 121 and arginine 152. Histidine 176 (proton acceptor) is an active-site residue.

Belongs to the LDH/MDH superfamily. MDH type 3 family.

The catalysed reaction is (S)-malate + NAD(+) = oxaloacetate + NADH + H(+). Its function is as follows. Catalyzes the reversible oxidation of malate to oxaloacetate. This chain is Malate dehydrogenase, found in Nitrobacter hamburgensis (strain DSM 10229 / NCIMB 13809 / X14).